The primary structure comprises 93 residues: MIHVYTSTGAWGWAGSCCWLWSFCPPACIGCIEEHLLSWPQVQGSSEQEIHYASLQRLPVSSSEGPDLRDRDKRGTKEDPRADYACIAENKPT.

The chain crosses the membrane as a helical span at residues 14-32 (AGSCCWLWSFCPPACIGCI). S54 bears the Phosphoserine mark. The disordered stretch occupies residues 57 to 82 (RLPVSSSEGPDLRDRDKRGTKEDPRA). A compositionally biased stretch (basic and acidic residues) spans 66–82 (PDLRDRDKRGTKEDPRA).

Belongs to the LST1 family.

It is found in the membrane. It localises to the golgi apparatus membrane. The protein resides in the endomembrane system. In terms of biological role, possible role in modulating immune responses. Has an inhibitory effect on lymphocyte proliferation. Induces morphological changes including production of filopodia and microspikes when overexpressed in a variety of cell types and may be involved in dendritic cell maturation. In Macaca mulatta (Rhesus macaque), this protein is Leukocyte-specific transcript 1 protein (LST1).